Reading from the N-terminus, the 593-residue chain is Dolichyl-phosphooligosaccharide-protein glycotransferase 2 (593 aa).

Residues 1 to 12 (MTPVGMDRKSLS) lie on the Cytoplasmic side of the membrane. Residues 13-33 (LLILIVLLGLCIRLQNFGEIF) form a helical membrane-spanning segment. At 34–98 (DSRIYYYGYD…GLFLGFWASE (65 aa)) the chain is on the extracellular side. A DXD motif 1 motif is present at residues 41 to 43 (GYD). Asp43 is a Mn(2+) binding site. Residues 99 to 119 (IFAVVFPVIIGVLCIVLVYLI) traverse the membrane as a helical segment. The Cytoplasmic segment spans residues 120–128 (SLEVLRNEK). Residues 129-149 (FALISAFIFSVCPVTVWKSLL) traverse the membrane as a helical segment. Over 150–154 (GKADH) the chain is Extracellular. Asp153 serves as a coordination point for Mn(2+). Residues 153–155 (DHH) carry the DXD motif 2 motif. His154 provides a ligand contact to a glycophospholipid. Mn(2+) is bound at residue His155. Residues 155 to 175 (HIWVVFLLLLSIWLVTKPGLL) traverse the membrane as a helical segment. The Cytoplasmic segment spans residues 176–180 (KLLSG). A helical membrane pass occupies residues 181–201 (IPMLLMALSWLGAPIYAALLA). Residues 202 to 229 (VSSLFQFNEKEVRIVGISNLIPVLSSIQ) lie on the Extracellular side of the membrane. Residues 230–250 (NLFLGFSFLAIAVFLLVGSFV) traverse the membrane as a helical segment. Residues 251-265 (KRFERRFRYAIVYYL) are Cytoplasmic-facing. Residues 266–286 (CICSVALLSAYLMPVGWLGFV) traverse the membrane as a helical segment. Residues 287 to 310 (KSGISYVLGTDIYLPTIREARSFQ) lie on the Extracellular side of the membrane. The TIXE motif motif lies at 302–305 (TIRE). Residues 311-331 (ILGVISSAGYLFFVLAIPALF) traverse the membrane as a helical segment. A topological domain (cytoplasmic) is located at residue Met332. Residues 333–353 (LRNGFLKVFFVLSFLISILQL) form a helical membrane-spanning segment. Position 354 (Arg354) is a topological domain, extracellular. Residue Arg354 participates in a glycophospholipid binding. A helical transmembrane segment spans residues 355 to 375 (FVEVLAFPVAILASYTICQIL). Topologically, residues 376–411 (ERVDYPVFRKEEEGESKRRGRKEKKKAVEIRKKDHA) are cytoplasmic. Residues 412–432 (TVIAFLLFLALPCFANSLAPV) form a helical membrane-spanning segment. Over 433 to 593 (EMTMDWKEAL…FGTVKIFEVK (161 aa)) the chain is Extracellular. An interacts with target acceptor peptide in protein substrate region spans residues 468-470 (WWD). The short motif at 468–472 (WWDYG) is the WWDYG motif element. The DKi motif motif lies at 524–539 (ELTVKPETNKTKFIPI).

This sequence belongs to the STT3 family. It depends on Mn(2+) as a cofactor. Mg(2+) serves as cofactor. Zn(2+) is required as a cofactor.

It is found in the cell membrane. The catalysed reaction is an archaeal dolichyl phosphooligosaccharide + [protein]-L-asparagine = an archaeal dolichyl phosphate + a glycoprotein with the oligosaccharide chain attached by N-beta-D-glycosyl linkage to a protein L-asparagine.. It participates in protein modification; protein glycosylation. Oligosaccharyl transferase (OST) that catalyzes the initial transfer of a defined glycan (a GalNAc-linked heptasaccharide composed of 4 Hex, 3 dHex and a sulfate for A.fulgidus AglB-S) from the lipid carrier dolichol-monophosphate to an asparagine residue within an Asn-X-Ser/Thr consensus motif in nascent polypeptide chains, the first step in protein N-glycosylation. This chain is Dolichyl-phosphooligosaccharide-protein glycotransferase 2 (aglB2), found in Archaeoglobus fulgidus (strain ATCC 49558 / DSM 4304 / JCM 9628 / NBRC 100126 / VC-16).